We begin with the raw amino-acid sequence, 150 residues long: uncharacterized protein (150 aa).

Its subcellular location is the plastid. The protein localises to the chloroplast. This is an uncharacterized protein from Pyropia yezoensis (Susabi-nori).